Consider the following 130-residue polypeptide: MSGRGKQGGKARAKAKTRSSRAGLQFPVGRVHRLLRKGNYSERVGAGAPVYLAAVLEYLTAEILELAANAARDNKKTRIIPRHLQLAIRNDEELNKLLGRVTIAQGGVLPNIQAVLLPKKTESHHKPKGK.

The segment at 1-22 (MSGRGKQGGKARAKAKTRSSRA) is disordered. S2 bears the Phosphoserine; by RPS6KA5 mark. Citrulline; alternate is present on R4. The residue at position 4 (R4) is a Symmetric dimethylarginine; by PRMT5; alternate. Residues K6 and K10 each carry the N6-(2-hydroxyisobutyryl)lysine modification. Positions 7–19 (QGGKARAKAKTRS) are enriched in basic residues. The residue at position 10 (K10) is an N6-lactoyllysine; alternate. K37 carries the post-translational modification N6-(2-hydroxyisobutyryl)lysine; alternate. The residue at position 37 (K37) is an N6-(beta-hydroxybutyryl)lysine; alternate. K37 bears the N6-crotonyllysine; alternate mark. An N6-(2-hydroxyisobutyryl)lysine mark is found at K75, K76, and K96. At K96 the chain carries N6-glutaryllysine; alternate. Q105 is subject to N5-methylglutamine. Position 119 is an N6-(2-hydroxyisobutyryl)lysine; alternate (K119). K119 and K120 each carry N6-crotonyllysine; alternate. N6-glutaryllysine; alternate is present on residues K119 and K120. K120 is covalently cross-linked (Glycyl lysine isopeptide (Lys-Gly) (interchain with G-Cter in ubiquitin); alternate). A Phosphothreonine; by DCAF1 modification is found at T121. K126 carries the N6-crotonyllysine; alternate modification. Position 126 is an N6-glutaryllysine; alternate (K126).

This sequence belongs to the histone H2A family. In terms of assembly, the nucleosome is a histone octamer containing two molecules each of H2A, H2B, H3 and H4 assembled in one H3-H4 heterotetramer and two H2A-H2B heterodimers. The octamer wraps approximately 147 bp of DNA. In terms of processing, deiminated on Arg-4 in granulocytes upon calcium entry. Monoubiquitination of Lys-120 (H2AK119Ub) by RING1, TRIM37 and RNF2/RING2 complex gives a specific tag for epigenetic transcriptional repression and participates in X chromosome inactivation of female mammals. It is involved in the initiation of both imprinted and random X inactivation. Ubiquitinated H2A is enriched in inactive X chromosome chromatin. Ubiquitination of H2A functions downstream of methylation of 'Lys-27' of histone H3 (H3K27me). H2AK119Ub by RNF2/RING2 can also be induced by ultraviolet and may be involved in DNA repair. Following DNA double-strand breaks (DSBs), it is ubiquitinated through 'Lys-63' linkage of ubiquitin moieties by the E2 ligase UBE2N and the E3 ligases RNF8 and RNF168, leading to the recruitment of repair proteins to sites of DNA damage. Ubiquitination at Lys-14 and Lys-16 (H2AK13Ub and H2AK15Ub, respectively) in response to DNA damage is initiated by RNF168 that mediates monoubiquitination at these 2 sites, and 'Lys-63'-linked ubiquitin are then conjugated to monoubiquitin; RNF8 is able to extend 'Lys-63'-linked ubiquitin chains in vitro. H2AK119Ub and ionizing radiation-induced 'Lys-63'-linked ubiquitination (H2AK13Ub and H2AK15Ub) are distinct events. Post-translationally, phosphorylation on Ser-2 (H2AS1ph) is enhanced during mitosis. Phosphorylation on Ser-2 by RPS6KA5/MSK1 directly represses transcription. Acetylation of H3 inhibits Ser-2 phosphorylation by RPS6KA5/MSK1. Phosphorylation at Thr-121 (H2AT120ph) by DCAF1 is present in the regulatory region of many tumor suppresor genes and down-regulates their transcription. In terms of processing, symmetric dimethylation on Arg-4 by the PRDM1/PRMT5 complex may play a crucial role in the germ-cell lineage. Glutamine methylation at Gln-105 (H2AQ104me) by FBL is specifically dedicated to polymerase I. It is present at 35S ribosomal DNA locus and impairs binding of the FACT complex. Post-translationally, crotonylation (Kcr) is specifically present in male germ cells and marks testis-specific genes in post-meiotic cells, including X-linked genes that escape sex chromosome inactivation in haploid cells. Crotonylation marks active promoters and enhancers and confers resistance to transcriptional repressors. It is also associated with post-meiotically activated genes on autosomes. In terms of processing, lactylated in macrophages by EP300/P300 by using lactoyl-CoA directly derived from endogenous or exogenous lactate, leading to stimulates gene transcription.

It is found in the nucleus. It localises to the chromosome. Its function is as follows. Core component of nucleosome. Nucleosomes wrap and compact DNA into chromatin, limiting DNA accessibility to the cellular machineries which require DNA as a template. Histones thereby play a central role in transcription regulation, DNA repair, DNA replication and chromosomal stability. DNA accessibility is regulated via a complex set of post-translational modifications of histones, also called histone code, and nucleosome remodeling. This Rattus norvegicus (Rat) protein is Histone H2A type 1-F.